A 115-amino-acid chain; its full sequence is uncharacterized protein (115 aa).

The N-terminal stretch at 1 to 29 (MKKAMAILAVLAAAAVICGLLFFHNDVTD) is a signal peptide.

This is an uncharacterized protein from Bacillus subtilis (strain 168).